The following is a 431-amino-acid chain: UDP-N-acetylglucosamine--N-acetylmuramyl-(pentapeptide) pyrophosphoryl-undecaprenol N-acetylglucosamine transferase (431 aa).

UDP-N-acetyl-alpha-D-glucosamine contacts are provided by residues 29 to 31 (TGG), Asn-141, Arg-177, Ser-205, Ile-258, and Gln-303. The disordered stretch occupies residues 370–431 (AGSGDGQPPA…NPGASAGGAP (62 aa)). A compositionally biased stretch (polar residues) spans 395–420 (KQGSMQTSVNGDRSAQLIATNPQSRL).

The protein belongs to the glycosyltransferase 28 family. MurG subfamily.

The protein localises to the cell inner membrane. The enzyme catalyses di-trans,octa-cis-undecaprenyl diphospho-N-acetyl-alpha-D-muramoyl-L-alanyl-D-glutamyl-meso-2,6-diaminopimeloyl-D-alanyl-D-alanine + UDP-N-acetyl-alpha-D-glucosamine = di-trans,octa-cis-undecaprenyl diphospho-[N-acetyl-alpha-D-glucosaminyl-(1-&gt;4)]-N-acetyl-alpha-D-muramoyl-L-alanyl-D-glutamyl-meso-2,6-diaminopimeloyl-D-alanyl-D-alanine + UDP + H(+). It participates in cell wall biogenesis; peptidoglycan biosynthesis. Functionally, cell wall formation. Catalyzes the transfer of a GlcNAc subunit on undecaprenyl-pyrophosphoryl-MurNAc-pentapeptide (lipid intermediate I) to form undecaprenyl-pyrophosphoryl-MurNAc-(pentapeptide)GlcNAc (lipid intermediate II). The sequence is that of UDP-N-acetylglucosamine--N-acetylmuramyl-(pentapeptide) pyrophosphoryl-undecaprenol N-acetylglucosamine transferase from Xanthomonas euvesicatoria pv. vesicatoria (strain 85-10) (Xanthomonas campestris pv. vesicatoria).